The primary structure comprises 332 residues: Putative ankyrin repeat protein R896 (332 aa).

ANK repeat units follow at residues 159–188, 190–218, 219–248, 249–278, and 280–308; these read GNDN…NVKS, DNCA…NVKA, DGNY…DIKA, AQNL…NIST, and NDYV…DIFS.

The sequence is that of Putative ankyrin repeat protein R896 from Acanthamoeba polyphaga mimivirus (APMV).